The chain runs to 80 residues: UPF0248 protein M1425_2629 (80 aa).

This sequence belongs to the UPF0248 family.

This chain is UPF0248 protein M1425_2629, found in Saccharolobus islandicus (strain M.14.25 / Kamchatka #1) (Sulfolobus islandicus).